Consider the following 190-residue polypeptide: Xanthine phosphoribosyltransferase (190 aa).

Residues Leu20 and Asn27 each coordinate xanthine. 129–133 (ANGRA) provides a ligand contact to 5-phospho-alpha-D-ribose 1-diphosphate. Lys157 provides a ligand contact to xanthine.

Belongs to the purine/pyrimidine phosphoribosyltransferase family. Xpt subfamily. In terms of assembly, homodimer.

The protein resides in the cytoplasm. The enzyme catalyses XMP + diphosphate = xanthine + 5-phospho-alpha-D-ribose 1-diphosphate. Its pathway is purine metabolism; XMP biosynthesis via salvage pathway; XMP from xanthine: step 1/1. In terms of biological role, converts the preformed base xanthine, a product of nucleic acid breakdown, to xanthosine 5'-monophosphate (XMP), so it can be reused for RNA or DNA synthesis. The protein is Xanthine phosphoribosyltransferase of Clostridioides difficile (strain 630) (Peptoclostridium difficile).